We begin with the raw amino-acid sequence, 74 residues long: MNDIKIRFGNKLKKLRKEKTDLSQESFAAQIDLDRTYYSSIENGKRNVSLVNLEKISAGLGITLSELFSDIEKE.

Positions 12–67 (LKKLRKEKTDLSQESFAAQIDLDRTYYSSIENGKRNVSLVNLEKISAGLGITLSEL) constitute an HTH cro/C1-type domain. Residues 23 to 42 (SQESFAAQIDLDRTYYSSIE) constitute a DNA-binding region (H-T-H motif).

Functionally, probably controls expression of its associated restriction-modification system MunI. The polypeptide is Control protein C.MunI (Mycoplasma sp).